Reading from the N-terminus, the 243-residue chain is MATLGRNVTITLIGHGTFHLTTPEGRNILIDAWVDGNPVCPEPWKARVRENLAAIFVTHGHFDHIADLVDLARETGATVVCQYDMVPYLEGEGIPAAQLVGFNKGGTVTVADVRATMTTAHHSSTIYENGQIINLGTAAGYVLRFSNGFTVYHTGDTCVTMDMQIIGELYRPDLVILPIGDHFTMDPRQAAYALKLIGAKYAIPEHYGTFPILTGTPEALIEHCREFGVTTEVIALKPGESVS.

It belongs to the UPF0173 family.

The chain is UPF0173 metal-dependent hydrolase Caur_2542 from Chloroflexus aurantiacus (strain ATCC 29366 / DSM 635 / J-10-fl).